Reading from the N-terminus, the 883-residue chain is Valine--tRNA ligase (883 aa).

The 'HIGH' region motif lies at 51–61 (PNVTGKLHLGH). The short motif at 527 to 531 (KMSKS) is the 'KMSKS' region element. Lys530 is an ATP binding site. Residues 811–847 (LEALIDLNVEIARLEKELEKWNKEVARVQGKLNNERF) are a coiled coil.

It belongs to the class-I aminoacyl-tRNA synthetase family. ValS type 1 subfamily. Monomer.

It is found in the cytoplasm. It carries out the reaction tRNA(Val) + L-valine + ATP = L-valyl-tRNA(Val) + AMP + diphosphate. Its function is as follows. Catalyzes the attachment of valine to tRNA(Val). As ValRS can inadvertently accommodate and process structurally similar amino acids such as threonine, to avoid such errors, it has a 'posttransfer' editing activity that hydrolyzes mischarged Thr-tRNA(Val) in a tRNA-dependent manner. The polypeptide is Valine--tRNA ligase (Listeria monocytogenes serovar 1/2a (strain ATCC BAA-679 / EGD-e)).